A 306-amino-acid chain; its full sequence is Type 3 secretion system translocon protein SctB (306 aa).

A helical transmembrane segment spans residues 128–152 (LMIAMAVVSGIMAATSTVASAFSIA).

It belongs to the SctB/YopD family. The core secretion machinery of the T3SS is composed of approximately 20 different proteins, including cytoplasmic components, a base, an export apparatus and a needle. This subunit is involved in the formation of a pore, called the translocon, in host membrane. Interacts with YopB/SctE and YopE. Together with YopB/SctE, forms a multimeric integral membrane complex with a mass of between 500 and 700 kDa. Interacts with its cognate chaperone SycD.

It localises to the secreted. The protein resides in the host membrane. Its function is as follows. Component of the type III secretion system (T3SS), also called injectisome, which is used to inject bacterial effector proteins into eukaryotic host cells. YopB/SctE and YopD/SctB are inserted into the host membrane where they form a pore and allow the translocation of effector proteins into the cytosol of target cells. Functionally, involved in pathogenesis. Essential for the establishment of Yersinia infections in a mouse model system, but not for the targeting of effector Yops. May modulate the host's immune response at a distance from the site of infection. This Yersinia enterocolitica protein is Type 3 secretion system translocon protein SctB.